A 130-amino-acid polypeptide reads, in one-letter code: Phosphoribosyl-AMP cyclohydrolase (130 aa).

Asp-77 lines the Mg(2+) pocket. Cys-78 contributes to the Zn(2+) binding site. Residues Asp-79 and Asp-81 each contribute to the Mg(2+) site. Residues Cys-95 and Cys-102 each contribute to the Zn(2+) site.

This sequence belongs to the PRA-CH family. As to quaternary structure, homodimer. Mg(2+) serves as cofactor. Zn(2+) is required as a cofactor.

Its subcellular location is the cytoplasm. The catalysed reaction is 1-(5-phospho-beta-D-ribosyl)-5'-AMP + H2O = 1-(5-phospho-beta-D-ribosyl)-5-[(5-phospho-beta-D-ribosylamino)methylideneamino]imidazole-4-carboxamide. It participates in amino-acid biosynthesis; L-histidine biosynthesis; L-histidine from 5-phospho-alpha-D-ribose 1-diphosphate: step 3/9. Catalyzes the hydrolysis of the adenine ring of phosphoribosyl-AMP. The chain is Phosphoribosyl-AMP cyclohydrolase from Pseudomonas entomophila (strain L48).